The primary structure comprises 406 residues: Tyrosine--tRNA ligase (406 aa).

The short motif at proline 48 to histidine 57 is the 'HIGH' region element. A 'KMSKS' region motif is present at residues lysine 232–serine 236. Position 235 (lysine 235) interacts with ATP. The S4 RNA-binding domain maps to methionine 339–arginine 401.

It belongs to the class-I aminoacyl-tRNA synthetase family. TyrS type 2 subfamily. Homodimer.

The protein resides in the cytoplasm. It catalyses the reaction tRNA(Tyr) + L-tyrosine + ATP = L-tyrosyl-tRNA(Tyr) + AMP + diphosphate + H(+). Catalyzes the attachment of tyrosine to tRNA(Tyr) in a two-step reaction: tyrosine is first activated by ATP to form Tyr-AMP and then transferred to the acceptor end of tRNA(Tyr). The protein is Tyrosine--tRNA ligase of Chlorobaculum tepidum (strain ATCC 49652 / DSM 12025 / NBRC 103806 / TLS) (Chlorobium tepidum).